The chain runs to 272 residues: Putative pyruvate, phosphate dikinase regulatory protein (272 aa).

Gly149 to Thr156 contacts ADP.

It belongs to the pyruvate, phosphate/water dikinase regulatory protein family. PDRP subfamily.

The catalysed reaction is N(tele)-phospho-L-histidyl/L-threonyl-[pyruvate, phosphate dikinase] + ADP = N(tele)-phospho-L-histidyl/O-phospho-L-threonyl-[pyruvate, phosphate dikinase] + AMP + H(+). It catalyses the reaction N(tele)-phospho-L-histidyl/O-phospho-L-threonyl-[pyruvate, phosphate dikinase] + phosphate + H(+) = N(tele)-phospho-L-histidyl/L-threonyl-[pyruvate, phosphate dikinase] + diphosphate. In terms of biological role, bifunctional serine/threonine kinase and phosphorylase involved in the regulation of the pyruvate, phosphate dikinase (PPDK) by catalyzing its phosphorylation/dephosphorylation. This is Putative pyruvate, phosphate dikinase regulatory protein from Lactiplantibacillus plantarum (strain ATCC BAA-793 / NCIMB 8826 / WCFS1) (Lactobacillus plantarum).